The sequence spans 457 residues: Multidrug resistance protein MdtK (457 aa).

12 helical membrane passes run 11–31 (LLALAIPVIFAQIAQTSMGVV), 53–73 (IWLPAILFGHGLLLALTPVIA), 93–113 (VLAGLVSVLIMLVLWNAGYII), 127–147 (AVNYLRALLWGAPGYLFFQVM), 160–180 (GMAMGFIGLLVNIPVNYIFIY), 188–208 (LGGVGCGVATASVYWVMFFCM), 243–263 (MPVALALFFEVTLFAVVALLV), 276–296 (IALNFSSLMFVLPMSMSAAVT), 316–336 (RTGIIVGICLAVLTALFTVVF), 357–377 (LMLLAAIYQISDSIQVIGSGV), 387–407 (IFFITFIAYWVLGLPSGYILG), and 418–438 (PAGFWFGFILGLTSAAIMMMW).

The protein belongs to the multi antimicrobial extrusion (MATE) (TC 2.A.66.1) family. MdtK subfamily.

Its subcellular location is the cell inner membrane. Its function is as follows. Multidrug efflux pump that functions probably as a Na(+)/drug antiporter. This is Multidrug resistance protein MdtK from Cronobacter sakazakii (strain ATCC BAA-894) (Enterobacter sakazakii).